The following is a 530-amino-acid chain: Tryptophan 7-halogenase RebH (530 aa).

7 residues coordinate FAD: glycine 13, threonine 15, alanine 16, alanine 39, aspartate 41, glutamate 49, and alanine 50. Residue lysine 79 is part of the active site. Residues valine 197 and threonine 348 each contribute to the FAD site. Glutamate 357 lines the L-tryptophan pocket. Residues threonine 359 and glycine 360 each coordinate chloride. Isoleucine 361 is a binding site for FAD. The L-tryptophan site is built by tyrosine 454, tyrosine 455, glutamate 461, and phenylalanine 465.

Belongs to the flavin-dependent halogenase family. Bacterial tryptophan halogenase subfamily. Homodimer.

It carries out the reaction L-tryptophan + FADH2 + chloride + O2 = 7-chloro-L-tryptophan + FAD + 2 H2O. Involved in the biosynthesis of the indolocarbazole antitumor agent rebeccamycin. Catalyzes the chlorination of tryptophan (Trp) at C7 position to yield 7-chlorotryptophan. It is also able to use bromide ions to generate monobrominated Trp. This is Tryptophan 7-halogenase RebH (rebH) from Lentzea aerocolonigenes (Lechevalieria aerocolonigenes).